A 66-amino-acid polypeptide reads, in one-letter code: MSQAVKQAYREVLKLVKRLPPPSRGYYAQYARENFVTYSEVEDPESIRSLLARVHHHTCWVLKKVR.

It belongs to the complex I LYR family. LYRM9 subfamily.

The protein is LYR motif-containing protein PHYPADRAFT_186863 of Physcomitrium patens (Spreading-leaved earth moss).